Reading from the N-terminus, the 161-residue chain is Cyclic pyranopterin monophosphate synthase (161 aa).

Substrate is bound by residues 75 to 77 and 113 to 114; these read LCH and ME. D128 is an active-site residue.

This sequence belongs to the MoaC family. Homohexamer; trimer of dimers.

It catalyses the reaction (8S)-3',8-cyclo-7,8-dihydroguanosine 5'-triphosphate = cyclic pyranopterin phosphate + diphosphate. It participates in cofactor biosynthesis; molybdopterin biosynthesis. Functionally, catalyzes the conversion of (8S)-3',8-cyclo-7,8-dihydroguanosine 5'-triphosphate to cyclic pyranopterin monophosphate (cPMP). The protein is Cyclic pyranopterin monophosphate synthase of Cupriavidus pinatubonensis (strain JMP 134 / LMG 1197) (Cupriavidus necator (strain JMP 134)).